Consider the following 218-residue polypeptide: Peroxynitrite isomerase 2 (218 aa).

Residues 1–24 form a disordered region; the sequence is MTPAGDTPERGSGDRAVAEAAERA. Positions 7–24 are enriched in basic and acidic residues; the sequence is TPERGSGDRAVAEAAERA. The GXWXGXG motif lies at 65 to 71; it reads GVWRGEG. Residues Lys181 and His208 each coordinate heme b.

The protein belongs to the nitrobindin family. Homodimer. The cofactor is heme b.

The enzyme catalyses peroxynitrite = nitrate. It participates in nitrogen metabolism. Heme-binding protein able to scavenge peroxynitrite and to protect free L-tyrosine against peroxynitrite-mediated nitration, by acting as a peroxynitrite isomerase that converts peroxynitrite to nitrate. Therefore, this protein likely plays a role in peroxynitrite sensing and in the detoxification of reactive nitrogen and oxygen species (RNS and ROS, respectively). Is able to bind nitric oxide (NO) in vitro, but may act as a sensor of peroxynitrite levels in vivo. This Mycolicibacterium smegmatis (strain ATCC 700084 / mc(2)155) (Mycobacterium smegmatis) protein is Peroxynitrite isomerase 2.